The following is a 236-amino-acid chain: Small ribosomal subunit protein uS2c (236 aa).

This sequence belongs to the universal ribosomal protein uS2 family.

It localises to the plastid. Its subcellular location is the chloroplast. This Morus indica (Mulberry) protein is Small ribosomal subunit protein uS2c (rps2).